Reading from the N-terminus, the 162-residue chain is NADH-quinone oxidoreductase subunit I 1 (162 aa).

4Fe-4S ferredoxin-type domains lie at leucine 52–glycine 82 and valine 93–asparagine 122. Positions 62, 65, 68, 72, 102, 105, 108, and 112 each coordinate [4Fe-4S] cluster.

It belongs to the complex I 23 kDa subunit family. In terms of assembly, NDH-1 is composed of 14 different subunits. Subunits NuoA, H, J, K, L, M, N constitute the membrane sector of the complex. It depends on [4Fe-4S] cluster as a cofactor.

The protein resides in the cell inner membrane. The catalysed reaction is a quinone + NADH + 5 H(+)(in) = a quinol + NAD(+) + 4 H(+)(out). In terms of biological role, NDH-1 shuttles electrons from NADH, via FMN and iron-sulfur (Fe-S) centers, to quinones in the respiratory chain. The immediate electron acceptor for the enzyme in this species is believed to be ubiquinone. Couples the redox reaction to proton translocation (for every two electrons transferred, four hydrogen ions are translocated across the cytoplasmic membrane), and thus conserves the redox energy in a proton gradient. This chain is NADH-quinone oxidoreductase subunit I 1, found in Rhodopseudomonas palustris (strain ATCC BAA-98 / CGA009).